A 235-amino-acid chain; its full sequence is Large ribosomal subunit protein uL1 (235 aa).

Belongs to the universal ribosomal protein uL1 family. In terms of assembly, part of the 50S ribosomal subunit.

In terms of biological role, binds directly to 23S rRNA. The L1 stalk is quite mobile in the ribosome, and is involved in E site tRNA release. Protein L1 is also a translational repressor protein, it controls the translation of the L11 operon by binding to its mRNA. The chain is Large ribosomal subunit protein uL1 from Mycobacterium marinum (strain ATCC BAA-535 / M).